We begin with the raw amino-acid sequence, 400 residues long: tRNA(Met) cytidine acetate ligase (400 aa).

ATP is bound by residues 7–20 (ITEY…HIYH), Gly102, Asn165, and Arg190.

It belongs to the TmcAL family.

The protein resides in the cytoplasm. The enzyme catalyses cytidine(34) in elongator tRNA(Met) + acetate + ATP = N(4)-acetylcytidine(34) in elongator tRNA(Met) + AMP + diphosphate. Functionally, catalyzes the formation of N(4)-acetylcytidine (ac(4)C) at the wobble position of elongator tRNA(Met), using acetate and ATP as substrates. First activates an acetate ion to form acetyladenylate (Ac-AMP) and then transfers the acetyl group to tRNA to form ac(4)C34. This Clostridium novyi (strain NT) protein is tRNA(Met) cytidine acetate ligase.